A 615-amino-acid polypeptide reads, in one-letter code: Afadin- and alpha-actinin-binding protein (615 aa).

2 coiled-coil regions span residues 126–227 and 266–293; these read KLGS…IAMD and RQKQILMENAELKKVLQQMKKEMISLLS. 4 positions are modified to phosphoserine: Ser290, Ser293, Ser313, and Ser319. A disordered region spans residues 293–316; the sequence is SPQKKKPRERAEDGTGTVAISDIE. A coiled-coil region spans residues 375–461; it reads ISRQDHEQET…RSFTEAAIRL (87 aa). Phosphoserine occurs at positions 537, 541, and 543. Residues 567–615 form a disordered region; sequence PEESKPSEVARESTDQKWSVQSRPSSREGCYSGCSSAFRSAHGDRDDLP. Basic and acidic residues predominate over residues 568-581; that stretch reads EESKPSEVARESTD.

The protein belongs to the ADIP family. As to quaternary structure, interacts with SSX2 and SSX3. Does not interact with SSX1 and SSX4. Interacts with afadin and alpha-actinin. Interacts with VAV2. Interacts with PCM1. Interacts with WRAP73. As to expression, widely expressed.

The protein localises to the cell junction. It localises to the adherens junction. The protein resides in the nucleus. It is found in the cytoplasm. Its subcellular location is the cytoskeleton. The protein localises to the microtubule organizing center. It localises to the centrosome. The protein resides in the centriolar satellite. It is found in the cilium basal body. In terms of biological role, belongs to an adhesion system, which plays a role in the organization of homotypic, interneuronal and heterotypic cell-cell adherens junctions (AJs). May connect the nectin-afadin and E-cadherin-catenin system through alpha-actinin and may be involved in organization of the actin cytoskeleton at AJs through afadin and alpha-actinin. Acts as a centrosome maturation factor, probably by maintaining the integrity of the pericentriolar material and proper microtubule nucleation at mitotic spindle poles. The function seems to implicate at least in part WRAP73; the SSX2IP:WRAP73 complex is proposed to act as regulator of spindle anchoring at the mitotic centrosome. Involved in cell movement: localizes at the leading edge of moving cells in response to PDGF and is required for the formation of the leading edge and the promotion of cell movement, possibly via activation of Rac signaling. Involved in ciliogenesis. It is required for targeted recruitment of the BBSome, CEP290, RAB8, and SSTR3 to the cilia. The sequence is that of Afadin- and alpha-actinin-binding protein (Ssx2ip) from Mus musculus (Mouse).